A 320-amino-acid polypeptide reads, in one-letter code: Beta-ketoacyl-[acyl-carrier-protein] synthase III (320 aa).

Residues Cys-112 and His-245 contribute to the active site. An ACP-binding region spans residues 246–250; that stretch reads QANIR. Asn-275 is a catalytic residue.

This sequence belongs to the thiolase-like superfamily. FabH family. As to quaternary structure, homodimer.

The protein resides in the cytoplasm. The catalysed reaction is malonyl-[ACP] + acetyl-CoA + H(+) = 3-oxobutanoyl-[ACP] + CO2 + CoA. Its pathway is lipid metabolism; fatty acid biosynthesis. Functionally, catalyzes the condensation reaction of fatty acid synthesis by the addition to an acyl acceptor of two carbons from malonyl-ACP. Catalyzes the first condensation reaction which initiates fatty acid synthesis and may therefore play a role in governing the total rate of fatty acid production. Possesses both acetoacetyl-ACP synthase and acetyl transacylase activities. Its substrate specificity determines the biosynthesis of branched-chain and/or straight-chain of fatty acids. This Streptococcus thermophilus (strain CNRZ 1066) protein is Beta-ketoacyl-[acyl-carrier-protein] synthase III.